A 420-amino-acid polypeptide reads, in one-letter code: Serine palmitoyltransferase (420 aa).

Positions 1 to 21 are enriched in polar residues; the sequence is MKHNLQDNLQGEQMANTNSNG. A disordered region spans residues 1 to 25; that stretch reads MKHNLQDNLQGEQMANTNSNGGKKP. Residues 132–133, histidine 233, threonine 261, and serine 263 each bind pyridoxal 5'-phosphate; that span reads GM. The residue at position 264 (lysine 264) is an N6-(pyridoxal phosphate)lysine.

The protein belongs to the class-II pyridoxal-phosphate-dependent aminotransferase family. As to quaternary structure, homodimer. Pyridoxal 5'-phosphate is required as a cofactor.

The protein localises to the cytoplasm. The protein resides in the cell inner membrane. It carries out the reaction L-serine + hexadecanoyl-CoA + H(+) = 3-oxosphinganine + CO2 + CoA. Its pathway is lipid metabolism; sphingolipid metabolism. With respect to regulation, significantly inhibited by palmitoyl-CoA concentrations greater than 100 uM. Catalyzes the condensation of L-serine with palmitoyl-CoA (hexadecanoyl-CoA) to produce 3-oxosphinganine. This is Serine palmitoyltransferase from Bacteriovorax stolpii (Bdellovibrio stolpii).